Reading from the N-terminus, the 163-residue chain is Anaerobic nitrite reductase HB1 (163 aa).

In terms of domain architecture, Globin spans 8–157 (VFTEEQEALV…LVAAIKIEMK (150 aa)). The short motif at 41–45 (EIAPS) is the Homodimerization element. Heme b is bound by residues S51, K65, H69, K99, T103, and H104. The short motif at 111–123 (DEHFEVTKFALLE) is the Homodimerization element.

The protein belongs to the plant globin family. As to quaternary structure, homodimer. Heme b is required as a cofactor.

Its subcellular location is the cytoplasm. The protein localises to the nucleus. It catalyses the reaction Fe(III)-heme b-[protein] + nitric oxide + H2O = Fe(II)-heme b-[protein] + nitrite + 2 H(+). Phytoglobin that reduces nitrite to nitric oxide (NO) under anoxic conditions (e.g. during flooding or in waterlogged soil). May not function as an oxygen storage or transport protein. Has an unusually high affinity for O(2) through an hexacoordinate heme iron because of a very low dissociation constant. This is Anaerobic nitrite reductase HB1 from Gossypium hirsutum (Upland cotton).